Here is a 411-residue protein sequence, read N- to C-terminus: Phosphoglycerate kinase (411 aa).

A disordered region spans residues 1–24 (MTGLCPLHQPSPLDHPHSGGTPMQ). Substrate-binding positions include 41–43 (DYN), arginine 56, 79–82 (HFGR), arginine 139, and arginine 172. Residues lysine 222, glycine 310, glutamate 341, and 369-372 (GGDS) contribute to the ATP site.

Belongs to the phosphoglycerate kinase family. In terms of assembly, monomer.

Its subcellular location is the cytoplasm. The enzyme catalyses (2R)-3-phosphoglycerate + ATP = (2R)-3-phospho-glyceroyl phosphate + ADP. Its pathway is carbohydrate degradation; glycolysis; pyruvate from D-glyceraldehyde 3-phosphate: step 2/5. The chain is Phosphoglycerate kinase from Deinococcus radiodurans (strain ATCC 13939 / DSM 20539 / JCM 16871 / CCUG 27074 / LMG 4051 / NBRC 15346 / NCIMB 9279 / VKM B-1422 / R1).